Consider the following 92-residue polypeptide: Small ribosomal subunit protein uS19 (92 aa).

The protein belongs to the universal ribosomal protein uS19 family.

Protein S19 forms a complex with S13 that binds strongly to the 16S ribosomal RNA. The polypeptide is Small ribosomal subunit protein uS19 (Rhodospirillum rubrum (strain ATCC 11170 / ATH 1.1.1 / DSM 467 / LMG 4362 / NCIMB 8255 / S1)).